The primary structure comprises 1046 residues: uncharacterized protein (1046 aa).

The span at 594–615 (LNSIPSDSSSSGSSRKSSPRGS) shows a compositional bias: low complexity. A disordered region spans residues 594–622 (LNSIPSDSSSSGSSRKSSPRGSPNLGEAP).

This is an uncharacterized protein from Invertebrate iridescent virus 6 (IIV-6).